Reading from the N-terminus, the 486-residue chain is N-succinylglutamate 5-semialdehyde dehydrogenase (486 aa).

Residue 220–225 participates in NAD(+) binding; that stretch reads GSSRTG. Catalysis depends on residues glutamate 243 and cysteine 277.

It belongs to the aldehyde dehydrogenase family. AstD subfamily.

The enzyme catalyses N-succinyl-L-glutamate 5-semialdehyde + NAD(+) + H2O = N-succinyl-L-glutamate + NADH + 2 H(+). It functions in the pathway amino-acid degradation; L-arginine degradation via AST pathway; L-glutamate and succinate from L-arginine: step 4/5. In terms of biological role, catalyzes the NAD-dependent reduction of succinylglutamate semialdehyde into succinylglutamate. The polypeptide is N-succinylglutamate 5-semialdehyde dehydrogenase (Shewanella piezotolerans (strain WP3 / JCM 13877)).